We begin with the raw amino-acid sequence, 246 residues long: UDP-N-acetyl-D-mannosaminuronic acid transferase (246 aa).

It belongs to the glycosyltransferase 26 family.

It catalyses the reaction UDP-N-acetyl-alpha-D-mannosaminouronate + N-acetyl-alpha-D-glucosaminyl-di-trans,octa-cis-undecaprenyl diphosphate = beta-D-ManNAcA-(1-&gt;4)-alpha-D-GlcNAc-di-trans,octa-cis-undecaprenyl diphosphate + UDP + H(+). The protein operates within bacterial outer membrane biogenesis; enterobacterial common antigen biosynthesis. Functionally, catalyzes the synthesis of Und-PP-GlcNAc-ManNAcA (Lipid II), the second lipid-linked intermediate involved in enterobacterial common antigen (ECA) synthesis. In Escherichia coli O1:K1 / APEC, this protein is UDP-N-acetyl-D-mannosaminuronic acid transferase.